The following is a 106-amino-acid chain: Large ribosomal subunit protein uL24 (106 aa).

Belongs to the universal ribosomal protein uL24 family. As to quaternary structure, part of the 50S ribosomal subunit.

One of two assembly initiator proteins, it binds directly to the 5'-end of the 23S rRNA, where it nucleates assembly of the 50S subunit. Its function is as follows. One of the proteins that surrounds the polypeptide exit tunnel on the outside of the subunit. The polypeptide is Large ribosomal subunit protein uL24 (Delftia acidovorans (strain DSM 14801 / SPH-1)).